The sequence spans 1045 residues: Elongation factor 3 (1045 aa).

3 residues coordinate ADP: I42, H44, and S83. 7 HEAT repeats span residues 86–123 (PYVV…AVNP), 125–162 (AVKA…QAKS), 166–203 (LRMT…TVEN), 171–209 (LIPV…IERF), 205–241 (DIER…EVTP), 242–279 (ATLS…LVED), and 285–323 (PFLN…VGAV). Positions 392 and 396 each coordinate ADP. 2 ABC transporter domains span residues 426–641 (EEGE…YYEL) and 667–993 (VKVS…KKED). The ADP site is built by N703, E922, N925, and H951. The tract at residues 975 to 1045 (GHNWVSGQGS…AYVSDDDADF (71 aa)) is disordered. Residues 1020-1031 (RKKKKERMKKKK) show a composition bias toward basic residues.

Belongs to the ABC transporter superfamily. ABCF family. EF3 subfamily.

It is found in the cytoplasm. The protein resides in the cytosol. The catalysed reaction is ATP + H2O = ADP + phosphate + H(+). The protein operates within protein biosynthesis; polypeptide chain elongation. Its function is as follows. Ribosome-dependent ATPase that functions in cytoplasmic translation elongation. Required for the ATP-dependent release of deacylated tRNA from the ribosomal E-site during protein biosynthesis. Stimulates the eEF1A-dependent binding of aminoacyl-tRNA to the ribosomal A-site, which has reduced affinity for tRNA as long as the E-site is occupied. Assists translation termination by stimulating the release of nascent protein from the ribosome by release factors. The sequence is that of Elongation factor 3 from Zygosaccharomyces rouxii (strain ATCC 2623 / CBS 732 / NBRC 1130 / NCYC 568 / NRRL Y-229).